Consider the following 1273-residue polypeptide: MSVKEGAQRKWAALKEKLGPQDSDPTEANLESAEPELCIRLLQMPSVVNYSGLRKRLESSDGGWMVQFLEQSGLDLLLEALARLSGRGVARISDALLQLTCISCVRAVMNSQQGIEYILSNQGYVRQLSQALDTSNVMVKKQVFELLAALCIYSPEGHALTLDALDHYKMVCSQQYRFSVIMSELSDSDNVPYVVTLLSVINAIILGPEDLRSRAQLRSEFIGLQLLDILTRLRDLEDADLLIQLEAFEEAKAEDEEELQRISDGINMNSHQEVFASLFHKVSCSPASAQLLSVLQGLMHLEPAGRSGQLLWEALENLVNRAVLLASDAQACTLEEVVERLLSIKGRPRPSPLDKAHKSVQTNSVQNQGSSSQNTTTPTTKVEGQQPVVASPCQHVGSIQSSSVDIAPQPVALEQCITALPLPTPPLSSSTPVLPPTPPPLPGPGATSPLPPPPPPLPPPLPGSGTTSPPPPPPPPPPLPPPLPGSGTISPPPPPPPPPLPGTGAVSPPPPPPLPSLPDSHKTQPPPPPPPPLPGMCPVPPPPPLPRAGQIPPPPPLPGFSVPSMMGGVEEIIVAQVDHSLGSAWVPSHRRVNPPTLRMKKLNWQKLPSNVARERNSMWATLGSPCTAAVEPDFSSIEQLFSFPTAKPKEPSAAPARKEPKEVTFLDSKKSLNLNIFLKQFKCSNEEVTSMIQAGDTSKFDVEVLKQLLKLLPEKHEIENLRAFTEERAKLSNADQFYVLLLDIPCYPLRVECMMLCEGTAIVLDMVRPKAQLVLTACESLLTSQRLPVFCQLILKIGNFLNYGSHTGDADGFKISTLLKLTETKSQQSRVTLLHHVLEEVEKSHPDLLQLSRDLEPPSQAAGINVEIIHSEASANLKKLLEAERKVSASIPEVQKQYAERLQASIEASQELDKVFDAIEQKKLELADYLCEDPQQLSLEDTFSTMKTFRDLFTRALKENKDRKEQMAKAERRKQQLAEEEARRPRDEDGKPIRKGPGKQEEVCVIDALLADIRKGFQLRKTARGRGDTEASGRVAPTDPPKATEPATASNPTQGTNHPASEPLDTTAADEPQGWDLVDAVTPSPQPSKEEDGPPALERRSSWYVDAIDFLDPEDTPDAQPSEGVWPVTLGDGQALNPLEFSSNKPPGVKSSHQDATDPEALWGVHQTEADSTSEGPEDEAQRGQSTHLPRTGPGEDEDGEDTAPESALDTSLDRSFSEDAVTDSSGSGTLPRVQGRVSKGTSKRRKKRPSRNQEEFVPDSDDIKAKRLCVIQ.

Disordered stretches follow at residues 1 to 30 (MSVK…EANL), 346 to 387 (GRPR…GQQP), 427 to 559 (LSSS…PLPG), 960 to 999 (NKDR…GPGK), and 1021 to 1273 (KTAR…CVIQ). S2 is modified (N-acetylserine). The 329-residue stretch at 2-330 (SVKEGAQRKW…RAVLLASDAQ (329 aa)) folds into the GBD/FH3 domain. Position 351 is a phosphoserine (S351). Residues 359 to 382 (SVQTNSVQNQGSSSQNTTTPTTKV) show a composition bias toward low complexity. In terms of domain architecture, FH1 spans 421–564 (PLPTPPLSSS…PPLPGFSVPS (144 aa)). Composition is skewed to pro residues over residues 433–516 (VLPP…PLPS) and 524–558 (QPPP…PPLP). An FH2 domain is found at 589-979 (HRRVNPPTLR…AERRKQQLAE (391 aa)). A coiled-coil region spans residues 907 to 984 (EASQELDKVF…QQLAEEEARR (78 aa)). Residues 1007–1022 (DALLADIRKGFQLRKT) enclose the WH2 domain. Residues 1047 to 1059 (ATASNPTQGTNHP) are compositionally biased toward polar residues. The segment covering 1088 to 1101 (SKEEDGPPALERRS) has biased composition (basic and acidic residues). A phosphoserine mark is found at S1172 and S1174. Residues 1195 to 1204 (GEDEDGEDTA) show a composition bias toward acidic residues. Position 1203 is a phosphothreonine (T1203). 2 positions are modified to phosphoserine: S1216 and S1218. A phosphothreonine mark is found at T1223 and T1230. Positions 1242–1251 (TSKRRKKRPS) are enriched in basic residues.

It belongs to the formin homology family. In terms of assembly, interacts with profilin and actin at the FH1 and FH2 domains respectively. Interacts with DAAM2.

It localises to the cytoplasm. The protein resides in the perinuclear region. With respect to regulation, phosphate inhibits both the depolymerization and severing activities. Severs actin filaments and accelerates their polymerization and depolymerization. This is Inverted formin-2 (Inf2) from Mus musculus (Mouse).